Here is a 98-residue protein sequence, read N- to C-terminus: NADH-ubiquinone oxidoreductase chain 4L (98 aa).

3 helical membrane passes run 2–22 (PSTF…TLMF), 26–46 (LMST…MTSV), and 58–79 (PIPI…ALLV).

The protein belongs to the complex I subunit 4L family. In terms of assembly, core subunit of respiratory chain NADH dehydrogenase (Complex I) which is composed of 45 different subunits.

The protein localises to the mitochondrion inner membrane. The catalysed reaction is a ubiquinone + NADH + 5 H(+)(in) = a ubiquinol + NAD(+) + 4 H(+)(out). Its function is as follows. Core subunit of the mitochondrial membrane respiratory chain NADH dehydrogenase (Complex I) which catalyzes electron transfer from NADH through the respiratory chain, using ubiquinone as an electron acceptor. Part of the enzyme membrane arm which is embedded in the lipid bilayer and involved in proton translocation. The sequence is that of NADH-ubiquinone oxidoreductase chain 4L from Mus musculus (Mouse).